A 346-amino-acid polypeptide reads, in one-letter code: Ribosomal RNA small subunit methyltransferase H (346 aa).

Residues 47-49 (GGY), aspartate 65, phenylalanine 92, aspartate 113, and glutamine 120 contribute to the S-adenosyl-L-methionine site. Residues 270–279 (RGEAPSRRLP) are compositionally biased toward basic and acidic residues. Residues 270–346 (RGEAPSRRLP…ALPQRAAKGR (77 aa)) are disordered.

This sequence belongs to the methyltransferase superfamily. RsmH family.

The protein localises to the cytoplasm. The catalysed reaction is cytidine(1402) in 16S rRNA + S-adenosyl-L-methionine = N(4)-methylcytidine(1402) in 16S rRNA + S-adenosyl-L-homocysteine + H(+). In terms of biological role, specifically methylates the N4 position of cytidine in position 1402 (C1402) of 16S rRNA. The polypeptide is Ribosomal RNA small subunit methyltransferase H (Methylocella silvestris (strain DSM 15510 / CIP 108128 / LMG 27833 / NCIMB 13906 / BL2)).